Here is a 336-residue protein sequence, read N- to C-terminus: UPF0324 membrane protein spr0034 (336 aa).

The next 8 membrane-spanning stretches (helical) occupy residues 65–84 (LLQY…QVFA), 91–113 (PVIL…FFAL), 118–140 (ATLV…APVI), 153–175 (VIFF…LHLS), 211–233 (SATI…LSYW), 249–271 (VFPL…TSLG), 286–305 (FLIV…VAMV), and 312–334 (ILLG…TLIG).

It belongs to the UPF0324 family.

Its subcellular location is the cell membrane. This chain is UPF0324 membrane protein spr0034, found in Streptococcus pneumoniae (strain ATCC BAA-255 / R6).